A 298-amino-acid chain; its full sequence is Mitochondrial nicotinamide adenine dinucleotide transporter SLC25A51 (298 aa).

The segment covering 1–11 has biased composition (basic and acidic residues); the sequence is MMDSEAHEKRP. The disordered stretch occupies residues 1-21; sequence MMDSEAHEKRPPMLTSSNQDL. 3 Solcar repeats span residues 28 to 108, 117 to 201, and 214 to 297; these read VGDM…LSRL, PEFA…IKES, and NDFI…LLKI. 6 helical membrane-spanning segments follow: residues 36–56, 85–105, 119–139, 180–200, 216–236, and 269–290; these read CGYC…KILF, LPPL…YEDL, FATR…LTPF, ILFR…PIKE, FICG…INVV, and LFRG…INAT.

It belongs to the mitochondrial carrier (TC 2.A.29) family.

The protein resides in the mitochondrion inner membrane. The catalysed reaction is NAD(+)(in) = NAD(+)(out). Functionally, mitochondrial membrane carrier protein that mediates the import of NAD(+) into mitochondria. Mitochondrial NAD(+) is required for glycolysis and mitochondrial respiration. Compared to SLC25A52, SLC25A51-mediated transport is essential for the import of NAD(+) in mitochondria. The transport mechanism, uniport or antiport, its electrogenicity and substrate selectivity, remain to be elucidated. This Mus musculus (Mouse) protein is Mitochondrial nicotinamide adenine dinucleotide transporter SLC25A51.